A 69-amino-acid chain; its full sequence is Alpha-elapitoxin-Lc2c (69 aa).

Disulfide bonds link Cys3–Cys20, Cys13–Cys41, Cys45–Cys56, and Cys57–Cys62.

Belongs to the three-finger toxin family. Long-chain subfamily. Type II alpha-neurotoxin sub-subfamily. As to expression, expressed by the venom gland.

Its subcellular location is the secreted. Functionally, binds with high affinity to muscular nicotinic acetylcholine receptors (nAChRs), whereas it binds with a low affinity to neuronal alpha-7/CHRNA7 nAChRs. The protein is Alpha-elapitoxin-Lc2c of Laticauda colubrina (Yellow-lipped sea krait).